The chain runs to 385 residues: Mannitol-1-phosphate 5-dehydrogenase (385 aa).

Position 3 to 14 (3 to 14) interacts with NAD(+); it reads ALQFGAGNIGRG.

This sequence belongs to the mannitol dehydrogenase family.

It carries out the reaction D-mannitol 1-phosphate + NAD(+) = beta-D-fructose 6-phosphate + NADH + H(+). The sequence is that of Mannitol-1-phosphate 5-dehydrogenase (mtlD) from Buchnera aphidicola subsp. Acyrthosiphon pisum (strain APS) (Acyrthosiphon pisum symbiotic bacterium).